Consider the following 404-residue polypeptide: Argininosuccinate synthase (404 aa).

9–17 (AYSGGLDTS) contacts ATP. An L-citrulline-binding site is contributed by Tyr86. Residue Gly116 participates in ATP binding. L-aspartate-binding residues include Thr118, Asn122, and Asp123. Asn122 contacts L-citrulline. Residues Arg126, Ser174, Ser183, Glu259, and Tyr271 each contribute to the L-citrulline site.

This sequence belongs to the argininosuccinate synthase family. Type 1 subfamily. In terms of assembly, homotetramer.

Its subcellular location is the cytoplasm. The enzyme catalyses L-citrulline + L-aspartate + ATP = 2-(N(omega)-L-arginino)succinate + AMP + diphosphate + H(+). The protein operates within amino-acid biosynthesis; L-arginine biosynthesis; L-arginine from L-ornithine and carbamoyl phosphate: step 2/3. The protein is Argininosuccinate synthase of Listeria monocytogenes serovar 1/2a (strain ATCC BAA-679 / EGD-e).